A 423-amino-acid polypeptide reads, in one-letter code: Deferrochelatase (423 aa).

A signal peptide (tat-type signal) is located at residues 1-35 (MQYEDENGVNEPSRRRLLKGIGALALAGSCPVAHA). Heme b contacts are provided by residues 236-238 (GTA), H329, 334-336 (NPR), and R347.

Belongs to the DyP-type peroxidase family. EfeB subfamily. In terms of assembly, homodimer. Part of a ferrous iron transporter composed of EfeU, EfeO and EfeB. Heme b serves as cofactor. In terms of processing, predicted to be exported by the Tat system. The position of the signal peptide cleavage has not been experimentally proven.

It localises to the periplasm. It catalyses the reaction heme b + 2 H(+) = protoporphyrin IX + Fe(2+). Involved in the recovery of exogenous heme iron. Extracts iron from heme while preserving the protoporphyrin ring intact. The sequence is that of Deferrochelatase (efeB) from Escherichia coli O6:K15:H31 (strain 536 / UPEC).